A 204-amino-acid chain; its full sequence is 3,4-dihydroxy-2-butanone 4-phosphate synthase (204 aa).

E27 contacts Mg(2+). D31 contacts D-ribulose 5-phosphate. The residue at position 56 (C56) is an S-glutathionyl cysteine. D-ribulose 5-phosphate contacts are provided by residues T82 and 140–144 (RDGHT). H143 lines the Mg(2+) pocket.

It belongs to the DHBP synthase family. In terms of assembly, homodimer. It depends on Mg(2+) as a cofactor. The cofactor is Mn(2+). In terms of processing, S-glutathionylation is reversible and dependent on a glutaredoxin.

The enzyme catalyses D-ribulose 5-phosphate = (2S)-2-hydroxy-3-oxobutyl phosphate + formate + H(+). It functions in the pathway cofactor biosynthesis; riboflavin biosynthesis; 2-hydroxy-3-oxobutyl phosphate from D-ribulose 5-phosphate: step 1/1. Catalyzes the conversion of D-ribulose 5-phosphate to formate and 3,4-dihydroxy-2-butanone 4-phosphate. This Schizosaccharomyces pombe (strain 972 / ATCC 24843) (Fission yeast) protein is 3,4-dihydroxy-2-butanone 4-phosphate synthase.